Reading from the N-terminus, the 488-residue chain is Calcium/calmodulin-dependent protein kinase type II subunit delta (488 aa).

Alanine 2 carries the N-acetylalanine modification. Residues 14–272 (YQLFEELGKG…ASEALKHPWI (259 aa)) enclose the Protein kinase domain. ATP contacts are provided by residues 20–28 (LGKGAFSVV) and lysine 43. Catalysis depends on aspartate 136, which acts as the Proton acceptor. The tract at residues 283 to 292 (HRQETVDCLK) is autoinhibitory domain. Residue threonine 287 is modified to Phosphothreonine; by autocatalysis. The segment at 291-301 (LKKFNARRKLK) is calmodulin-binding. Threonine 306 and threonine 307 each carry phosphothreonine; by autocatalysis. Residue serine 315 is modified to Phosphoserine. N6-acetyllysine is present on lysine 317. A phosphoserine mark is found at serine 318 and serine 340. Positions 325–350 (GVKKRKSSSSVQMMESTESSNTTIED) are disordered. Polar residues predominate over residues 332-347 (SSSVQMMESTESSNTT). Phosphothreonine is present on threonine 341. Serine 343 carries the phosphoserine modification. Phosphothreonine is present on residues threonine 346 and threonine 347. Serine 414 is subject to Phosphoserine.

The protein belongs to the protein kinase superfamily. CAMK Ser/Thr protein kinase family. CaMK subfamily. As to quaternary structure, CAMK2 is composed of 4 different chains: alpha (CAMK2A), beta (CAMK2B), gamma (CAMK2G), and delta (CAMK2D). The different isoforms assemble into homo- or heteromultimeric holoenzymes composed of 12 subunits with two hexameric rings stacked one on top of the other. Interacts with RRAD and CACNB2. Autophosphorylation of Thr-287 following activation by Ca(2+)/calmodulin. Phosphorylation of Thr-287 locks the kinase into an activated state.

It localises to the cell membrane. The protein localises to the sarcolemma. It is found in the sarcoplasmic reticulum membrane. The catalysed reaction is L-seryl-[protein] + ATP = O-phospho-L-seryl-[protein] + ADP + H(+). It catalyses the reaction L-threonyl-[protein] + ATP = O-phospho-L-threonyl-[protein] + ADP + H(+). With respect to regulation, activated by Ca(2+)/calmodulin. Binding of calmodulin results in conformational change that relieves intrasteric autoinhibition and allows autophosphorylation of Thr-287 which turns the kinase in a constitutively active form and confers to the kinase a Ca(2+)-independent activity. Functionally, calcium/calmodulin-dependent protein kinase involved in the regulation of Ca(2+) homeostatis and excitation-contraction coupling (ECC) in heart by targeting ion channels, transporters and accessory proteins involved in Ca(2+) influx into the myocyte, Ca(2+) release from the sarcoplasmic reticulum (SR), SR Ca(2+) uptake and Na(+) and K(+) channel transport. Targets also transcription factors and signaling molecules to regulate heart function. In its activated form, is involved in the pathogenesis of dilated cardiomyopathy and heart failure. Contributes to cardiac decompensation and heart failure by regulating SR Ca(2+) release via direct phosphorylation of RYR2 Ca(2+) channel on 'Ser-2808'. In the nucleus, phosphorylates the MEF2 repressor HDAC4, promoting its nuclear export and binding to 14-3-3 protein, and expression of MEF2 and genes involved in the hypertrophic program. Is essential for left ventricular remodeling responses to myocardial infarction. In pathological myocardial remodeling acts downstream of the beta adrenergic receptor signaling cascade to regulate key proteins involved in ECC. Regulates Ca(2+) influx to myocytes by binding and phosphorylating the L-type Ca(2+) channel subunit beta-2 CACNB2. In addition to Ca(2+) channels, can target and regulate the cardiac sarcolemmal Na(+) channel Nav1.5/SCN5A and the K+ channel Kv4.3/KCND3, which contribute to arrhythmogenesis in heart failure. Phosphorylates phospholamban (PLN/PLB), an endogenous inhibitor of SERCA2A/ATP2A2, contributing to the enhancement of SR Ca(2+) uptake that may be important in frequency-dependent acceleration of relaxation (FDAR) and maintenance of contractile function during acidosis. May participate in the modulation of skeletal muscle function in response to exercise, by regulating SR Ca(2+) transport through phosphorylation of PLN/PLB and triadin, a ryanodine receptor-coupling factor. In response to interferon-gamma (IFN-gamma) stimulation, catalyzes phosphorylation of STAT1, stimulating the JAK-STAT signaling pathway. The chain is Calcium/calmodulin-dependent protein kinase type II subunit delta (CAMK2D) from Bos taurus (Bovine).